We begin with the raw amino-acid sequence, 326 residues long: MAFISFPPRHPSSSARLPLTLIALDDWALSTITGVDSEKYIQGQVTADVSQMTEQQHLLAAHCDAKGKMWSTLRLFRERDGFAWIERRSVREAQLTELKKYAVFSKVVIAPDDERVLLGVAGFQARAALANVFSELPNSENQVVRDGASTLLWFEHPAERFLLVTDVATANMLTEKLHGEAELNNSQQWLALDIEAGIPVIDAANSGQFIPQATNLQALGGISFKKGCYTGQEMVARAKFRGANKRALWLLAGKASRVPEAGEDLELQMGENWRRTGAILAATQLDDGQLLVQAVMNNDLEAESVFRVRDDANTLHIVPLPYSLEE.

Folate-binding residues include Trp-27 and Trp-189.

The protein belongs to the tRNA-modifying YgfZ family.

It localises to the cytoplasm. Folate-binding protein involved in regulating the level of ATP-DnaA and in the modification of some tRNAs. It is probably a key factor in regulatory networks that act via tRNA modification, such as initiation of chromosomal replication. The polypeptide is tRNA-modifying protein YgfZ (Salmonella paratyphi A (strain AKU_12601)).